A 503-amino-acid polypeptide reads, in one-letter code: ATP synthase subunit alpha (503 aa).

169 to 176 serves as a coordination point for ATP; the sequence is GDRKTGKT.

This sequence belongs to the ATPase alpha/beta chains family. F-type ATPases have 2 components, CF(1) - the catalytic core - and CF(0) - the membrane proton channel. CF(1) has five subunits: alpha(3), beta(3), gamma(1), delta(1), epsilon(1). CF(0) has three main subunits: a(1), b(2) and c(9-12). The alpha and beta chains form an alternating ring which encloses part of the gamma chain. CF(1) is attached to CF(0) by a central stalk formed by the gamma and epsilon chains, while a peripheral stalk is formed by the delta and b chains.

The protein localises to the cell membrane. It catalyses the reaction ATP + H2O + 4 H(+)(in) = ADP + phosphate + 5 H(+)(out). Increases 2-fold following exposure to low pH. Its function is as follows. Produces ATP from ADP in the presence of a proton gradient across the membrane. The alpha chain is a regulatory subunit. In Lactobacillus acidophilus (strain ATCC 700396 / NCK56 / N2 / NCFM), this protein is ATP synthase subunit alpha.